A 117-amino-acid polypeptide reads, in one-letter code: Appetite-regulating hormone (117 aa).

A signal peptide spans methionine 1–alanine 23. A lipid anchor (O-decanoyl serine; alternate) is attached at serine 26. Serine 26 carries O-hexanoyl serine; alternate lipidation. The O-octanoyl serine; alternate moiety is linked to residue serine 26. Residues proline 30–alanine 68 form a disordered region. Residues glutamate 31–lysine 43 are compositionally biased toward basic and acidic residues. Positions alanine 52 to arginine 75 are cleaved as a propeptide — removed in mature form. Leucine 98 is modified (leucine amide). Positions glycine 99 to glutamate 117 are cleaved as a propeptide — removed in mature form.

Belongs to the motilin family. In terms of processing, O-octanoylated by GOAT/MBOAT4. O-octanoylation is essential for ghrelin activity. Post-translationally, amidation of Leu-98 is essential for obestatin activity.

Its subcellular location is the secreted. In terms of biological role, ghrelin is the ligand for growth hormone secretagogue receptor type 1 (GHSR). Induces the release of growth hormone from the pituitary. Has an appetite-stimulating effect, induces adiposity and stimulates gastric acid secretion. Involved in growth regulation. Functionally, obestatin may be the ligand for GPR39. May have an appetite-reducing effect resulting in decreased food intake. May reduce gastric emptying activity and jejunal motility. This chain is Appetite-regulating hormone (GHRL), found in Canis lupus familiaris (Dog).